The following is a 138-amino-acid chain: uncharacterized protein (138 aa).

The next 2 helical transmembrane spans lie at 1–21 (MEIG…EAIV) and 46–66 (YAFI…HKFV).

Its subcellular location is the cell membrane. This is an uncharacterized protein from Methanocaldococcus jannaschii (strain ATCC 43067 / DSM 2661 / JAL-1 / JCM 10045 / NBRC 100440) (Methanococcus jannaschii).